The primary structure comprises 707 residues: Elongation factor G (707 aa).

The 285-residue stretch at 9 to 293 (HDVRNIGIMA…GVVDYLPSPE (285 aa)) folds into the tr-type G domain. Residues 18-25 (AHIDAGKT), 90-94 (DTPGH), and 144-147 (NKMD) each bind GTP.

This sequence belongs to the TRAFAC class translation factor GTPase superfamily. Classic translation factor GTPase family. EF-G/EF-2 subfamily.

The protein resides in the cytoplasm. Its function is as follows. Catalyzes the GTP-dependent ribosomal translocation step during translation elongation. During this step, the ribosome changes from the pre-translocational (PRE) to the post-translocational (POST) state as the newly formed A-site-bound peptidyl-tRNA and P-site-bound deacylated tRNA move to the P and E sites, respectively. Catalyzes the coordinated movement of the two tRNA molecules, the mRNA and conformational changes in the ribosome. The protein is Elongation factor G of Bifidobacterium longum (strain DJO10A).